We begin with the raw amino-acid sequence, 94 residues long: MPTSETSWWPGACLCSSCAWTSDSRFFNLWTLGLAPAASQGFSGLKPQTDDCTVSFPGFEAFGLGLSHYWHLSFPACRQSIMGLCLVIVLANSS.

As to expression, specifically expressed in retina and retinal pigment epithelium.

This is an uncharacterized protein from Homo sapiens (Human).